Here is a 282-residue protein sequence, read N- to C-terminus: Protein OS-9 homolog (282 aa).

The first 23 residues, 1–23 (MRITQILLCLVIVALSSSSHVWS), serve as a signal peptide directing secretion. N-linked (GlcNAc...) asparagine glycosylation is present at asparagine 94. In terms of domain architecture, MRH spans 120–239 (EKCLFRQEGW…TVQCPTLCKH (120 aa)). Cysteine 122 and cysteine 135 are oxidised to a cystine. A mannooligosaccharide derivative contacts are provided by tryptophan 129, tryptophan 130, and glutamine 142. Asparagine 169 and asparagine 190 each carry an N-linked (GlcNAc...) asparagine glycan. 2 disulfide bridges follow: cysteine 194/cysteine 225 and cysteine 209/cysteine 237. A mannooligosaccharide derivative is bound by residues aspartate 195, arginine 201, glutamate 221, and tyrosine 227. The span at 262–276 (DATRNKEEQAVDESP) shows a compositional bias: basic and acidic residues. Residues 262–282 (DATRNKEEQAVDESPKMIADS) are disordered.

The protein belongs to the OS-9 family. Interacts with HRD3A.

Its subcellular location is the endoplasmic reticulum. Lectin which functions in endoplasmic reticulum (ER) quality control and ER-associated degradation (ERAD). May bind terminally misfolded non-glycosylated proteins as well as improperly folded glycoproteins, retain them in the ER, and possibly transfer them to the ubiquitination machinery and promote their degradation. Targets the misfolded LRR receptor kinase BRI1 and the misfolded receptor-like kinase EFR. The sequence is that of Protein OS-9 homolog from Arabidopsis thaliana (Mouse-ear cress).